We begin with the raw amino-acid sequence, 270 residues long: Aliphatic sulfonates import ATP-binding protein SsuB (270 aa).

In terms of domain architecture, ABC transporter spans 17–238 (LASSGLRKTF…ARGSHRLAAL (222 aa)). 49-56 (GRSGCGKS) provides a ligand contact to ATP. The interval 249-270 (APGAAPEPDPVAPLPTQLRWAH) is disordered.

This sequence belongs to the ABC transporter superfamily. Aliphatic sulfonates importer (TC 3.A.1.17.2) family. As to quaternary structure, the complex is composed of two ATP-binding proteins (SsuB), two transmembrane proteins (SsuC) and a solute-binding protein (SsuA).

It is found in the cell inner membrane. It catalyses the reaction ATP + H2O + aliphatic sulfonate-[sulfonate-binding protein]Side 1 = ADP + phosphate + aliphatic sulfonateSide 2 + [sulfonate-binding protein]Side 1.. Its function is as follows. Part of the ABC transporter complex SsuABC involved in aliphatic sulfonates import. Responsible for energy coupling to the transport system. This is Aliphatic sulfonates import ATP-binding protein SsuB from Pseudomonas putida (Arthrobacter siderocapsulatus).